A 62-amino-acid chain; its full sequence is Short neurotoxin A (62 aa).

A compositionally biased stretch (polar residues) spans 1–16 (RRCFNHPSSQPQTNKS). A disordered region spans residues 1-21 (RRCFNHPSSQPQTNKSCPPGE). 4 cysteine pairs are disulfide-bonded: Cys3–Cys24, Cys17–Cys41, Cys43–Cys54, and Cys55–Cys60.

It belongs to the three-finger toxin family. Short-chain subfamily. Type I alpha-neurotoxin sub-subfamily. As to expression, expressed by the venom gland.

The protein resides in the secreted. Functionally, binds to muscle nicotinic acetylcholine receptor (nAChR) and inhibit acetylcholine from binding to the receptor, thereby impairing neuromuscular transmission. The polypeptide is Short neurotoxin A (Laticauda crockeri (Crocker's sea snake)).